Consider the following 235-residue polypeptide: MGQKVHPHGIRLGIVKPWSSTWFANTQDFADNLDGDFKVRKFLNKELANASVSRITIERPAKSIRVTIHTARPGIVIGKKGEDVEKLRNAVAAIAGVPAQINIAEVKKPELDAKLVADSIASQLERRVMFRRAMKRAVQNAMRLGAKGIKVEVSGRLGGAEIARSEWYREGRVPLHTLRADIDYNTAEAHTTYGVIGIKVWIFKGEILGGMAAIAQPEQQPADKPKKAPRGKGRK.

The KH type-2 domain occupies 39–107 (VRKFLNKELA…PAQINIAEVK (69 aa)). The segment at 215 to 235 (AQPEQQPADKPKKAPRGKGRK) is disordered.

This sequence belongs to the universal ribosomal protein uS3 family. As to quaternary structure, part of the 30S ribosomal subunit. Forms a tight complex with proteins S10 and S14.

In terms of biological role, binds the lower part of the 30S subunit head. Binds mRNA in the 70S ribosome, positioning it for translation. The chain is Small ribosomal subunit protein uS3 from Pasteurella multocida (strain Pm70).